The sequence spans 422 residues: Enolase (422 aa).

Gln162 provides a ligand contact to (2R)-2-phosphoglycerate. The Proton donor role is filled by Glu204. Positions 241, 285, and 312 each coordinate Mg(2+). (2R)-2-phosphoglycerate is bound by residues Lys337, Arg366, Ser367, and Lys388. Residue Lys337 is the Proton acceptor of the active site.

Belongs to the enolase family. Mg(2+) serves as cofactor.

It is found in the cytoplasm. The protein resides in the secreted. It localises to the cell surface. It carries out the reaction (2R)-2-phosphoglycerate = phosphoenolpyruvate + H2O. The protein operates within carbohydrate degradation; glycolysis; pyruvate from D-glyceraldehyde 3-phosphate: step 4/5. Functionally, catalyzes the reversible conversion of 2-phosphoglycerate (2-PG) into phosphoenolpyruvate (PEP). It is essential for the degradation of carbohydrates via glycolysis. This is Enolase from Streptococcus thermophilus.